Consider the following 145-residue polypeptide: Protein MMF1, mitochondrial (145 aa).

The N-terminal 17 residues, 1 to 17, are a transit peptide targeting the mitochondrion; sequence MFLRNSVLRTAPVLRRG.

It belongs to the RutC family.

The protein resides in the mitochondrion matrix. Functionally, plays a role in the maintenance of mitochondrial DNA. This Saccharomyces cerevisiae (strain ATCC 204508 / S288c) (Baker's yeast) protein is Protein MMF1, mitochondrial (MMF1).